Reading from the N-terminus, the 186-residue chain is Spermidine N(1)-acetyltransferase (186 aa).

Positions 7–167 (VKLRPLERED…NAIRMCIFQH (161 aa)) constitute an N-acetyltransferase domain. Spermine contacts are provided by residues methionine 30, glutamate 35, glutamate 43, and 51–54 (HIHD). Glutamate 35 is a Mg(2+) binding site. Glutamate 35 and glutamate 43 together coordinate spermidine. Glutamate 76 is a Mg(2+) binding site. A spermine-binding site is contributed by 85–87 (EFQ). Acetyl-CoA-binding positions include 88–90 (III), 95–101 (QGKGLAT), and 128–137 (NEKAIHIYRK). Tyrosine 135 functions as the Proton donor in the catalytic mechanism.

Belongs to the acetyltransferase family. As to quaternary structure, homododecamer.

Its subcellular location is the cytoplasm. The catalysed reaction is an alkane-alpha,omega-diamine + acetyl-CoA = an N-acetylalkane-alpha,omega-diamine + CoA + H(+). It carries out the reaction spermidine + acetyl-CoA = N(1)-acetylspermidine + CoA + H(+). The enzyme catalyses spermidine + acetyl-CoA = N(8)-acetylspermidine + CoA + H(+). It catalyses the reaction spermine + acetyl-CoA = N(1)-acetylspermine + CoA + H(+). Its pathway is amine and polyamine degradation; spermidine degradation. It participates in amine and polyamine degradation; spermine degradation. In terms of biological role, involved in the protection against polyamine toxicity by regulating their concentration. Catalyzes the transfer of an acetyl group from acetyl coenzyme A (AcCoA) to the primary amino groups of spermidine to yield N(1)- and N(8)-acetylspermidine. It can also use spermine. The polypeptide is Spermidine N(1)-acetyltransferase (speG) (Escherichia coli O157:H7).